A 715-amino-acid chain; its full sequence is Metastasis-associated protein MTA1 (715 aa).

Residues 1 to 164 form the BAH domain; the sequence is MAANMYRVGD…PQQKTLLADK (164 aa). An ELM2 domain is found at 165–276; the sequence is GEIRVGNRYQ…KAISALVPQG (112 aa). Lys-182 participates in a covalent cross-link: Glycyl lysine isopeptide (Lys-Gly) (interchain with G-Cter in ubiquitin). An SANT domain is found at 283-335; it reads DEMEEWSASEANLFEEALEKYGKDFTDIQQDFLPWKSLTSIIEYYYMWKTTDR. At Ser-386 the chain carries Phosphoserine. The segment at 393–420 adopts a GATA-type; atypical zinc-finger fold; the sequence is CESCYTTQSYQWYSWGPPNMQCRLCASC. The segment at 435–460 is disordered; that stretch reads RLDGERPGPNRSNMSPHGLPARSSGS. 2 positions are modified to phosphoserine: Ser-446 and Ser-449. A Glycyl lysine isopeptide (Lys-Gly) (interchain with G-Cter in SUMO2 and SUMO3) cross-link involves residue Lys-509. The residue at position 522 (Ser-522) is a Phosphoserine. An SH3-binding motif is present at residues 545–552; the sequence is PRPPKPDP. Lys-549 participates in a covalent cross-link: Glycyl lysine isopeptide (Lys-Gly) (interchain with G-Cter in SUMO2). Thr-564 carries the post-translational modification Phosphothreonine. Ser-576 carries the phosphoserine modification. Thr-578 bears the Phosphothreonine mark. Residue Lys-626 is modified to N6-acetyllysine; alternate. Lys-626 participates in a covalent cross-link: Glycyl lysine isopeptide (Lys-Gly) (interchain with G-Cter in ubiquitin); alternate. Phosphoserine is present on Ser-639. The tract at residues 656-686 is interaction with RBBP4; it reads DVFYMATEETRKIRKLLSSSETKRAARRPYK. The tract at residues 673–715 is disordered; that stretch reads SSSETKRAARRPYKPIALRQSQALPPRPPPPAPVNDEPIVIED. Residues 696 to 705 carry the SH3-binding motif; it reads LPPRPPPPAP. The SUMO interaction motif 1 (SIM); crucial for efficient sumoylation motif lies at 711–715; sequence IVIED.

It belongs to the metastasis-associated protein family. As to quaternary structure, component of the nucleosome remodeling and deacetylase (NuRD) repressor complex, composed of core proteins MTA1, MTA2, MTA3, RBBP4, RBBP7, HDAC1, HDAC2, MBD2, MBD3, and peripherally associated proteins CDK2AP1, CDK2AP2, GATAD2A, GATAD2B, CHD3, CHD4 and CHD5. The exact stoichiometry of the NuRD complex is unknown, and some subunits such as MBD2 and MBD3, GATAD2A and GATAD2B, and CHD3, CHD4 and CHD5 define mutually exclusive NuRD complexes. Interacts with RBBP4; the interaction is direct. Interacts with BMAL1. Interacts with CLOCK. Interacts with COP1. Interacts with CSNK1G2 in the cytoplasm. Interacts with EP300. Interacts with HDAC2. Interacts with IFI16. Interacts with ITGB3BP/CENPR. Interacts with MBD3L2. Interacts with MDM2. Interacts with NACC2. Interacts with p53/TP53. Interacts with PIAS1. Interacts with PIAS3. Interacts with PIAS4. Interacts with PWWP2A. Interacts with PWWP2B. Interacts with SENP1. Interacts with SENP2. Interacts with SIX3; facilitates the binding of SIX3 to the core DNA motif of SIX3 promoter. Interacts with SUMO1. Interacts with SUMO2. Interacts with TFCP2L1; which is indispensable for TFCP2L1-mediated self-renewal-promoting effect and endoderm-inhibiting action. Interacts with TFAP2C. Interacts with TPR. Interacts with UBE2I/UBC9. Phosphorylation by CSNK1G2/CK1 triggered by estrogen enhances corepression of estrogen receptor (ER). In terms of processing, acetylation is essential for its transcriptional coactivator activity. Post-translationally, sumoylation positively regulates its transcriptional corepressor activity but does not affect the protein stability. Sumoylated preferentially by SUMO2 or SUMO3 than SUMO1. Sumoylation is enhanced by PIAS1/3/4 and preferentially sumoylated by SUMO2 in the presence of PIAS1/3/4. Desumoylated by SENP1. Ubiquitinated by COP1, which leads to proteasomal degradation. As to expression, widely expressed. High expression in brain, liver, kidney, and cardiac muscle, ovaries, adrenal glands and virgin mammary glands. Higher in tumors than in adjacent normal tissue from the same individual. Up-regulated in a wide variety of cancers including breast, liver, ovarian, and colorectal cancer and its expression levels are closely correlated with tumor aggressiveness and metastasis.

Its subcellular location is the nucleus. The protein resides in the cytoplasm. It localises to the nucleus envelope. It is found in the cytoskeleton. Its function is as follows. Transcriptional coregulator which can act as both a transcriptional corepressor and coactivator. Acts as a component of the histone deacetylase NuRD complex which participates in the remodeling of chromatin. In the NuRD complex, regulates transcription of its targets by modifying the acetylation status of the target chromatin and cofactor accessibility to the target DNA. In conjunction with other components of NuRD, acts as a transcriptional corepressor of BRCA1, ESR1, TFF1 and CDKN1A. Acts as a transcriptional coactivator of BCAS3, and SUMO2, independent of the NuRD complex. Stimulates the expression of WNT1 by inhibiting the expression of its transcriptional corepressor SIX3. Regulates p53-dependent and -independent DNA repair processes following genotoxic stress. Regulates the stability and function of p53/TP53 by inhibiting its ubiquitination by COP1 and MDM2 thereby regulating the p53-dependent DNA repair. Plays a role in the regulation of the circadian clock and is essential for the generation and maintenance of circadian rhythms under constant light and for normal entrainment of behavior to light-dark (LD) cycles. Positively regulates the CLOCK-BMAL1 heterodimer mediated transcriptional activation of its own transcription and the transcription of CRY1. Regulates deacetylation of BMAL1 by regulating SIRT1 expression, resulting in derepressing CRY1-mediated transcription repression. With TFCP2L1, promotes establishment and maintenance of pluripotency in embryonic stem cells (ESCs) and inhibits endoderm differentiation. Functionally, binds to ESR1 and sequesters it in the cytoplasm and enhances its non-genomic responses. The chain is Metastasis-associated protein MTA1 (MTA1) from Homo sapiens (Human).